We begin with the raw amino-acid sequence, 323 residues long: MTIRAVVRGVGHYLPDRVVPNSELEAIVETTDEWIRTRSGIERRHFAAEGQTTSDLAARAARAALEDAGLQPDDIDTLIVATSTADLTFPSAATMVQAALGMTRGFAFDVQAVCAGFVYALANADALIRSGQAQRVLVIGAETFSRLMDWNDRATCVLFGDGAGAVVLEGTESAGTSADRGILATDLHSDGRFKDLLYVDGGSSTGTTGHLRMQGREVFRHAVEKLAETAHTALEKAGLGAGDVDWIVPHQANLRIISATAQRMQVPMDRVILTVQDHGNTSAASIPLALSVGKARGQIKEGDLLVTEAIGGGLAWGSVVLRW.

Residues C114 and H250 contribute to the active site. Residues 251–255 form an ACP-binding region; the sequence is QANLR. N280 is an active-site residue.

It belongs to the thiolase-like superfamily. FabH family. In terms of assembly, homodimer.

The protein localises to the cytoplasm. The enzyme catalyses malonyl-[ACP] + acetyl-CoA + H(+) = 3-oxobutanoyl-[ACP] + CO2 + CoA. It participates in lipid metabolism; fatty acid biosynthesis. Functionally, catalyzes the condensation reaction of fatty acid synthesis by the addition to an acyl acceptor of two carbons from malonyl-ACP. Catalyzes the first condensation reaction which initiates fatty acid synthesis and may therefore play a role in governing the total rate of fatty acid production. Possesses both acetoacetyl-ACP synthase and acetyl transacylase activities. Its substrate specificity determines the biosynthesis of branched-chain and/or straight-chain of fatty acids. The sequence is that of Beta-ketoacyl-[acyl-carrier-protein] synthase III from Cereibacter sphaeroides (strain ATCC 17023 / DSM 158 / JCM 6121 / CCUG 31486 / LMG 2827 / NBRC 12203 / NCIMB 8253 / ATH 2.4.1.) (Rhodobacter sphaeroides).